Consider the following 124-residue polypeptide: Small ribosomal subunit protein uS12 (124 aa).

Residues 1–32 are disordered; that stretch reads MPTISQLIRHGRQKQKKRTKSPALKSSPQRRG. Residues 9-20 are compositionally biased toward basic residues; it reads RHGRQKQKKRTK. Asp-89 bears the 3-methylthioaspartic acid mark.

This sequence belongs to the universal ribosomal protein uS12 family. Part of the 30S ribosomal subunit. Contacts proteins S8 and S17. May interact with IF1 in the 30S initiation complex.

Functionally, with S4 and S5 plays an important role in translational accuracy. Its function is as follows. Interacts with and stabilizes bases of the 16S rRNA that are involved in tRNA selection in the A site and with the mRNA backbone. Located at the interface of the 30S and 50S subunits, it traverses the body of the 30S subunit contacting proteins on the other side and probably holding the rRNA structure together. The combined cluster of proteins S8, S12 and S17 appears to hold together the shoulder and platform of the 30S subunit. This Leptospira borgpetersenii serovar Hardjo-bovis (strain JB197) protein is Small ribosomal subunit protein uS12.